The chain runs to 427 residues: MEYKRSSHVEEEEEEEEEEDDEEEDEEEQGHHQYTTAAAQQQLHPQVLGSSASSPSSLMDSAAFSRPLLPPNLSLVSPSAAAAAAPGGSYLHAAHHHGQGRRVEAPGGESQHHLQRHHEPARNGVLGGVAGAHAASTLALVGGGGGGPRGGEGAAGEAPTWRYRECLKNHAARMGAHVLDGCGEFMSSPGDGAAALACAACGCHRSFHRREPAVVAPASLSLCPASASASAAAGLVSLSPSATPTGANSSRLMPLLLAPPHMQKRPPVLPVSPASAPAALAESSSEELRPPPLPSSHPHAHAAAVVAASASAPPGPSKKRFRTKFTAEQKERMREFAHRVGWRIHKPDAAAVDAFCAQVGVSRRVLKVWMHNNKHLAKTPPSPTSQPPPPPLHHDPSPPPPPHHHHHHHHHHHPPQHHQQQQQQHDA.

Disordered stretches follow at residues 1–60 (MEYK…SLMD) and 91–118 (LHAAHHHGQGRRVEAPGGESQHHLQRHH). Residues 10–28 (EEEEEEEEEEDDEEEDEEE) are compositionally biased toward acidic residues. Residues 50–60 (SSASSPSSLMD) are compositionally biased toward low complexity. A ZF-HD dimerization-type; degenerate zinc finger spans residues 163-211 (YRECLKNHAARMGAHVLDGCGEFMSSPGDGAAALACAACGCHRSFHRRE). 2 disordered regions span residues 264–320 (KRPP…SKKR) and 375–427 (HLAK…QHDA). 2 stretches are compositionally biased toward low complexity: residues 271–283 (VSPASAPAALAES) and 301–312 (HAAAVVAASASA). The homeobox DNA-binding region spans 318-381 (KKRFRTKFTA…NNKHLAKTPP (64 aa)). Residues 380–401 (PPSPTSQPPPPPLHHDPSPPPP) show a composition bias toward pro residues. The segment covering 402-416 (PHHHHHHHHHHHPPQ) has biased composition (basic residues). Positions 417–427 (HHQQQQQQHDA) are enriched in low complexity.

As to quaternary structure, homo- and heterodimer with other ZFHD proteins.

Its subcellular location is the nucleus. Putative transcription factor. The chain is Zinc-finger homeodomain protein 7 (ZHD7) from Oryza sativa subsp. japonica (Rice).